We begin with the raw amino-acid sequence, 301 residues long: MDKVIATPGGTNEIIRKYNLKLHKGLGQNFLIDQNIVDKIINTADLNNEDIVIEIGPGIGSLTQKIVPRSGRVFAFEKDKRLVKVLRELFNGYNHLEVIGQDVLEVDWKHFFDSRGISDRSVKVLANLPYYITTPVIMGLLESNITFSLMVLMVQKEVADRMAAAPGSKDYGALSVAVQYYGEVEIFHKVPPTVFIPRPRVYSSIIKIKPHSEPVYRVKNEGFFFKMVRAIFQQRRKTLKNSLTKSSEIKLDKGIVTEAIRELGLDPRIRGEKLTIKQMAILSNTLWYKISEEDGENHEIY.

S-adenosyl-L-methionine-binding residues include N29, L31, G56, E77, D102, and N127.

The protein belongs to the class I-like SAM-binding methyltransferase superfamily. rRNA adenine N(6)-methyltransferase family. RsmA subfamily.

The protein resides in the cytoplasm. The catalysed reaction is adenosine(1518)/adenosine(1519) in 16S rRNA + 4 S-adenosyl-L-methionine = N(6)-dimethyladenosine(1518)/N(6)-dimethyladenosine(1519) in 16S rRNA + 4 S-adenosyl-L-homocysteine + 4 H(+). Specifically dimethylates two adjacent adenosines (A1518 and A1519) in the loop of a conserved hairpin near the 3'-end of 16S rRNA in the 30S particle. May play a critical role in biogenesis of 30S subunits. This chain is Ribosomal RNA small subunit methyltransferase A, found in Halothermothrix orenii (strain H 168 / OCM 544 / DSM 9562).